Here is a 435-residue protein sequence, read N- to C-terminus: UPF0597 protein ASA_0240 (435 aa).

Belongs to the UPF0597 family.

This is UPF0597 protein ASA_0240 from Aeromonas salmonicida (strain A449).